The following is a 621-amino-acid chain: Chaperone protein DnaK (621 aa).

The residue at position 202 (Thr202) is a Phosphothreonine; by autocatalysis. The interval 596 to 621 (SQFAQAAKQNEEKKEEDKKDSEESKN) is disordered. Positions 604 to 621 (QNEEKKEEDKKDSEESKN) are enriched in basic and acidic residues.

This sequence belongs to the heat shock protein 70 family.

Its function is as follows. Acts as a chaperone. The protein is Chaperone protein DnaK of Malacoplasma penetrans (strain HF-2) (Mycoplasma penetrans).